The primary structure comprises 428 residues: MSLDLPPPPARGCRNGDVLKERGQREVFCGLTGIIWLHRKMQDAFFLVVGSRTCAHLLQSAAGVMIFAEPRFGTAILEEKDLAGLADANAELDREVERLLSRRPDIRQLFLVGSCPSEVIKLDLHRAAERLSAQHGPAVRVYNFTGSGIETTFTQGEDACLASIVPTLPATEARELLLVGALPDVVEDQAVSLLTALGIGPIRVLPAHHAAEAPGVGPNTVFALVQPFLGETHGALTRRGARHIAAPFPFGEEGTTLWLKAIADEFGVSPAKFEEVTAAPRARARKAVAAASETLKGKSLFFFPDSQLEPSLARFLTRECGMSAIEVGTPFLHRGILGPDLDLLAEGPVISEGQDVERQIDRVRATNPDLTVCGLGLANPLEAEGFTTKWAIELVFTPVHFYEQAGDLAGLFARPLRRRAILRREAAE.

The [4Fe-4S] cluster site is built by cysteine 29, cysteine 54, and cysteine 115.

This sequence belongs to the BchN/ChlN family. As to quaternary structure, protochlorophyllide reductase is composed of three subunits; BchL, BchN and BchB. Forms a heterotetramer of two BchB and two BchN subunits. [4Fe-4S] cluster serves as cofactor.

It catalyses the reaction chlorophyllide a + oxidized 2[4Fe-4S]-[ferredoxin] + 2 ADP + 2 phosphate = protochlorophyllide a + reduced 2[4Fe-4S]-[ferredoxin] + 2 ATP + 2 H2O. It participates in porphyrin-containing compound metabolism; bacteriochlorophyll biosynthesis (light-independent). Component of the dark-operative protochlorophyllide reductase (DPOR) that uses Mg-ATP and reduced ferredoxin to reduce ring D of protochlorophyllide (Pchlide) to form chlorophyllide a (Chlide). This reaction is light-independent. The NB-protein (BchN-BchB) is the catalytic component of the complex. The chain is Light-independent protochlorophyllide reductase subunit N from Cereibacter sphaeroides (strain ATCC 17025 / ATH 2.4.3) (Rhodobacter sphaeroides).